We begin with the raw amino-acid sequence, 51 residues long: DNA-directed RNA polymerases II, IV and V subunit 12 (51 aa).

Residues cysteine 12, cysteine 15, cysteine 29, and cysteine 32 each contribute to the Zn(2+) site.

Belongs to the archaeal Rpo12/eukaryotic RPC10 RNA polymerase subunit family. As to quaternary structure, component of the RNA polymerase II, IV and V complexes. Associates with the mediator complex. Interacts with NRPD1.

The protein resides in the nucleus. In terms of biological role, DNA-dependent RNA polymerase catalyzes the transcription of DNA into RNA using the four ribonucleoside triphosphates as substrates. Component of RNA polymerase II which synthesizes mRNA precursors and many functional non-coding RNAs. Pol II is the central component of the basal RNA polymerase II transcription machinery. It is composed of mobile elements that move relative to each other. Component of RNA polymerases IV and V which mediate short-interfering RNAs (siRNA) accumulation and subsequent RNA-directed DNA methylation-dependent (RdDM) transcriptional gene silencing (TGS) of endogenous repeated sequences, including transposable elements. The protein is DNA-directed RNA polymerases II, IV and V subunit 12 (NRPB12) of Arabidopsis thaliana (Mouse-ear cress).